The sequence spans 611 residues: DNA mismatch repair protein MutL (611 aa).

It belongs to the DNA mismatch repair MutL/HexB family.

Functionally, this protein is involved in the repair of mismatches in DNA. It is required for dam-dependent methyl-directed DNA mismatch repair. May act as a 'molecular matchmaker', a protein that promotes the formation of a stable complex between two or more DNA-binding proteins in an ATP-dependent manner without itself being part of a final effector complex. In Rickettsia bellii (strain RML369-C), this protein is DNA mismatch repair protein MutL.